The sequence spans 76 residues: Peptide ARACIN 1 (76 aa).

Residues 1 to 22 (MAMKTSHVLLLCLMFVIGFVEA) form the signal peptide. The propeptide at 23-35 (RRSDTGPDISTPP) is removed in mature form. A SxS motif essential for MIK2 binding motif is present at residues 36–38 (SGS). Residues 36–49 (SGSCGASIAEFNSS) carry the SCOOP motif motif. Residues 56–76 (APPCRRPRLQNSEDVTHTTLP) are disordered. Over residues 64 to 76 (LQNSEDVTHTTLP) the composition is skewed to polar residues.

This sequence belongs to the serine rich endogenous peptide (SCOOP) phytocytokine family. As to quaternary structure, interacts with MIK2 (via extracellular leucine-rich repeat domain); this interaction triggers the formation of complex between MIK2 and the BAK1/SERK3 and SERK4 coreceptors, and subsequent BAK1 activation by phosphorylation. In terms of tissue distribution, mainly expressed in young developing leaves, hydathodes, immature flowers and elongating pollen tubes.

Its subcellular location is the cell membrane. It is found in the secreted. It localises to the extracellular space. The protein localises to the apoplast. The protein resides in the endoplasmic reticulum. In terms of biological role, brassicaceae-specific phytocytokine (plant endogenous peptide released into the apoplast) perceived by MIK2 in a BAK1/SERK3 and SERK4 coreceptors-dependent manner, that modulates various physiological and antimicrobial processes including growth prevention and reactive oxygen species (ROS) response regulation. Inhibits the fungal growth of Alternaria brassicicola, Sclerotinia sclerotiorum, Fusarium graminearum, yeast (Saccharomyces) and Botrytis cinerea, thus being an antimicrobial peptide (AMP). Promotes resistance to A.brassicicola and B.cinerea. The sequence is that of Peptide ARACIN 1 from Arabidopsis thaliana (Mouse-ear cress).